The following is a 377-amino-acid chain: DNA methyltransferase CcrM (377 aa).

The 103-residue stretch at 271–373 folds into the RAMA domain; sequence LGKAELTVMT…LRKIIREQMA (103 aa).

Belongs to the N(4)/N(6)-methyltransferase family.

It catalyses the reaction a 2'-deoxyadenosine in DNA + S-adenosyl-L-methionine = an N(6)-methyl-2'-deoxyadenosine in DNA + S-adenosyl-L-homocysteine + H(+). A beta subtype methylase that recognizes the double-stranded sequence 5'-GANTC-3' and methylates on A-2 on both strands. Overexpression from a moderate-copy number plasmid (10-12 copies/cell) leads to enlarged, branched cells, many with 3-5 genome equivalents. Contributes to the accurate cell-cycle control of DNA replication and cellular morphology. This Brucella abortus (strain 2308) protein is DNA methyltransferase CcrM.